Consider the following 229-residue polypeptide: Potassium/proton antiporter CemA (229 aa).

Helical transmembrane passes span 6-26, 107-127, and 189-209; these read AFIPFFDFTSIVFLPWLISLC, ILHFSTNLISFVILSGYSFWG, and ILSGLVSTFPVILDTIFKYWI.

Belongs to the CemA family.

Its subcellular location is the plastid. The protein resides in the chloroplast inner membrane. The enzyme catalyses K(+)(in) + H(+)(out) = K(+)(out) + H(+)(in). Its function is as follows. Contributes to K(+)/H(+) antiport activity by supporting proton efflux to control proton extrusion and homeostasis in chloroplasts in a light-dependent manner to modulate photosynthesis. Prevents excessive induction of non-photochemical quenching (NPQ) under continuous-light conditions. Indirectly promotes efficient inorganic carbon uptake into chloroplasts. This chain is Potassium/proton antiporter CemA, found in Lepidium virginicum (Virginia pepperweed).